The sequence spans 378 residues: Probable cytochrome oxidase subunit 2 (378 aa).

Topologically, residues 1-8 (MIDYEFLR) are cytoplasmic. The helical transmembrane segment at 9–28 (FIWWVLVIVLLIGFSVTDGF) threads the bilayer. Residues 29 to 79 (DMGVTALLPVIGKKEVERRIMINTIAPHWDGNQVWLLTAGGAIFAAWPIVY) are Periplasmic-facing. A helical membrane pass occupies residues 80-99 (AVSFSGFYIALVLVLAALFL). Residues 100–122 (RPLGFEYRAKIDNPTWRSVWDWG) are Cytoplasmic-facing. A helical membrane pass occupies residues 123–142 (LFAGGFVPALVFGVAFGNLL). Over 143-164 (QGVPFHFNELTQVTYTGSFFEL) the chain is Periplasmic. The helical transmembrane segment at 165-184 (LNPFALLCGVISLSMLVTHG) threads the bilayer. The Cytoplasmic portion of the chain corresponds to 185–205 (ANWLQMKTTEALRDRARTVSQ). A helical transmembrane segment spans residues 206–224 (IGSIVTLIAFVLAGVWLYS). The Periplasmic segment spans residues 225 to 261 (KDGYVVTSTIDHFAPSSPMNKEVAVETGAWFRNFNEM). Residues 262–281 (PILWIFPALAVVAALLNAAF) traverse the membrane as a helical segment. The Cytoplasmic portion of the chain corresponds to 282–291 (SKANRCGFAF). The helical transmembrane segment at 292–311 (FFSALTMAGVIITAAVSMFP) threads the bilayer. Residues 312 to 335 (FVMPSSSHPEQSLLMWDSTSSELT) lie on the Periplasmic side of the membrane. The chain crosses the membrane as a helical span at residues 336-355 (LTLMLIFAVVFVVIALAYTI). Over 356–378 (WSYSKMFGRLDANFIDKNKHSLY) the chain is Cytoplasmic.

It belongs to the cytochrome ubiquinol oxidase subunit 2 family. Heterodimer of subunits I and II.

Its subcellular location is the cell inner membrane. Functionally, probable cytochrome oxidase subunit. In Haemophilus influenzae (strain ATCC 51907 / DSM 11121 / KW20 / Rd), this protein is Probable cytochrome oxidase subunit 2.